Here is a 179-residue protein sequence, read N- to C-terminus: Large ribosomal subunit protein uL6 (179 aa).

Belongs to the universal ribosomal protein uL6 family. As to quaternary structure, part of the 50S ribosomal subunit.

Its function is as follows. This protein binds to the 23S rRNA, and is important in its secondary structure. It is located near the subunit interface in the base of the L7/L12 stalk, and near the tRNA binding site of the peptidyltransferase center. This is Large ribosomal subunit protein uL6 from Synechocystis sp. (strain ATCC 27184 / PCC 6803 / Kazusa).